Reading from the N-terminus, the 101-residue chain is Protein Tat (101 aa).

An interaction with human CREBBP region spans residues methionine 1–asparagine 24. The tract at residues methionine 1 to glycine 48 is transactivation. Positions 22, 25, and 27 each coordinate Zn(2+). The interval cysteine 22–cysteine 37 is cysteine-rich. At lysine 28 the chain carries N6-acetyllysine; by host PCAF. Residues cysteine 30, histidine 33, cysteine 34, and cysteine 37 each coordinate Zn(2+). The core stretch occupies residues phenylalanine 38–glycine 48. Positions glycine 48–aspartate 101 are disordered. A Nuclear localization signal, RNA-binding (TAR), and protein transduction motif is present at residues arginine 49–serine 57. The interaction with the host capping enzyme RNGTT stretch occupies residues arginine 49–glutamate 86. Residues lysine 50 and lysine 51 each carry the N6-acetyllysine; by host EP300 and GCN5L2 modification. Asymmetric dimethylarginine; by host PRMT6 is present on residues arginine 52 and arginine 53. The span at threonine 82–aspartate 101 shows a compositional bias: basic and acidic residues.

This sequence belongs to the lentiviruses Tat family. Interacts with host CCNT1. Associates with the P-TEFb complex composed at least of Tat, P-TEFb (CDK9 and CCNT1), TAR RNA, RNA Pol II. Recruits the HATs CREBBP, TAF1/TFIID, EP300, PCAF and GCN5L2. Interacts with host KAT5/Tip60; this interaction targets the latter to degradation. Interacts with the host deacetylase SIRT1. Interacts with host capping enzyme RNGTT; this interaction stimulates RNGTT. Binds to host KDR, and to the host integrins ITGAV/ITGB3 and ITGA5/ITGB1. Interacts with host KPNB1/importin beta-1 without previous binding to KPNA1/importin alpha-1. Interacts with EIF2AK2. Interacts with host nucleosome assembly protein NAP1L1; this interaction may be required for the transport of Tat within the nucleus, since the two proteins interact at the nuclear rim. Interacts with host C1QBP/SF2P32; this interaction involves lysine-acetylated Tat. Interacts with the host chemokine receptors CCR2, CCR3 and CXCR4. Interacts with host DPP4/CD26; this interaction may trigger an anti-proliferative effect. Interacts with host LDLR. Interacts with the host extracellular matrix metalloproteinase MMP1. Interacts with host PRMT6; this interaction mediates Tat's methylation. Interacts with, and is ubiquitinated by MDM2/Hdm2. Interacts with host PSMC3 and HTATIP2. Interacts with STAB1; this interaction may overcome SATB1-mediated repression of IL2 and IL2RA (interleukin) in T cells by binding to the same domain than HDAC1. Interacts (when acetylated) with human CDK13, thereby increasing HIV-1 mRNA splicing and promoting the production of the doubly spliced HIV-1 protein Nef. Interacts with host TBP; this interaction modulates the activity of transcriptional pre-initiation complex. Interacts with host RELA. Interacts with host PLSCR1; this interaction negatively regulates Tat transactivation activity by altering its subcellular distribution. In terms of processing, asymmetrical arginine methylation by host PRMT6 seems to diminish the transactivation capacity of Tat and affects the interaction with host CCNT1. Acetylation by EP300, CREBBP, GCN5L2/GCN5 and PCAF regulates the transactivation activity of Tat. EP300-mediated acetylation of Lys-50 promotes dissociation of Tat from the TAR RNA through the competitive binding to PCAF's bromodomain. In addition, the non-acetylated Tat's N-terminus can also interact with PCAF. PCAF-mediated acetylation of Lys-28 enhances Tat's binding to CCNT1. Lys-50 is deacetylated by SIRT1. Post-translationally, polyubiquitination by host MDM2 does not target Tat to degradation, but activates its transactivation function and fosters interaction with CCNT1 and TAR RNA. In terms of processing, phosphorylated by EIF2AK2 on serine and threonine residues adjacent to the basic region important for TAR RNA binding and function. Phosphorylation of Tat by EIF2AK2 is dependent on the prior activation of EIF2AK2 by dsRNA.

Its subcellular location is the host nucleus. It is found in the host nucleolus. The protein localises to the host cytoplasm. It localises to the secreted. In terms of biological role, transcriptional activator that increases RNA Pol II processivity, thereby increasing the level of full-length viral transcripts. Recognizes a hairpin structure at the 5'-LTR of the nascent viral mRNAs referred to as the transactivation responsive RNA element (TAR) and recruits the cyclin T1-CDK9 complex (P-TEFb complex) that will in turn hyperphosphorylate the RNA polymerase II to allow efficient elongation. The CDK9 component of P-TEFb and other Tat-activated kinases hyperphosphorylate the C-terminus of RNA Pol II that becomes stabilized and much more processive. Other factors such as HTATSF1/Tat-SF1, SUPT5H/SPT5, and HTATIP2 are also important for Tat's function. Besides its effect on RNA Pol II processivity, Tat induces chromatin remodeling of proviral genes by recruiting the histone acetyltransferases (HATs) CREBBP, EP300 and PCAF to the chromatin. This also contributes to the increase in proviral transcription rate, especially when the provirus integrates in transcriptionally silent region of the host genome. To ensure maximal activation of the LTR, Tat mediates nuclear translocation of NF-kappa-B by interacting with host RELA. Through its interaction with host TBP, Tat may also modulate transcription initiation. Tat can reactivate a latently infected cell by penetrating in it and transactivating its LTR promoter. In the cytoplasm, Tat is thought to act as a translational activator of HIV-1 mRNAs. Extracellular circulating Tat can be endocytosed by surrounding uninfected cells via the binding to several surface receptors such as CD26, CXCR4, heparan sulfate proteoglycans (HSPG) or LDLR. Neurons are rarely infected, but they internalize Tat via their LDLR. Through its interaction with nuclear HATs, Tat is potentially able to control the acetylation-dependent cellular gene expression. Modulates the expression of many cellular genes involved in cell survival, proliferation or in coding for cytokines or cytokine receptors. Tat plays a role in T-cell and neurons apoptosis. Tat induced neurotoxicity and apoptosis probably contribute to neuroAIDS. Circulating Tat also acts as a chemokine-like and/or growth factor-like molecule that binds to specific receptors on the surface of the cells, affecting many cellular pathways. In the vascular system, Tat binds to ITGAV/ITGB3 and ITGA5/ITGB1 integrins dimers at the surface of endothelial cells and competes with bFGF for heparin-binding sites, leading to an excess of soluble bFGF. In Human immunodeficiency virus type 1 group M subtype J (isolate SE9173) (HIV-1), this protein is Protein Tat.